Consider the following 278-residue polypeptide: Energy-coupling factor transporter ATP-binding protein EcfA (278 aa).

An ABC transporter domain is found at 4–239 (LETRDLKYSY…SETVRSANLR (236 aa)). Residue 37–44 (GPNGAGKS) participates in ATP binding.

The protein belongs to the ABC transporter superfamily. Energy-coupling factor EcfA family. Forms a stable energy-coupling factor (ECF) transporter complex composed of 2 membrane-embedded substrate-binding proteins (S component), 2 ATP-binding proteins (A component) and 2 transmembrane proteins (T component).

Its subcellular location is the cell membrane. Functionally, ATP-binding (A) component of a common energy-coupling factor (ECF) ABC-transporter complex. Unlike classic ABC transporters this ECF transporter provides the energy necessary to transport a number of different substrates. In Methanococcus maripaludis (strain DSM 14266 / JCM 13030 / NBRC 101832 / S2 / LL), this protein is Energy-coupling factor transporter ATP-binding protein EcfA.